A 379-amino-acid chain; its full sequence is UDP-4-amino-4-deoxy-L-arabinose--oxoglutarate aminotransferase (379 aa).

K182 is modified (N6-(pyridoxal phosphate)lysine).

This sequence belongs to the DegT/DnrJ/EryC1 family. ArnB subfamily. As to quaternary structure, homodimer. The cofactor is pyridoxal 5'-phosphate.

It carries out the reaction UDP-4-amino-4-deoxy-beta-L-arabinose + 2-oxoglutarate = UDP-beta-L-threo-pentopyranos-4-ulose + L-glutamate. It functions in the pathway nucleotide-sugar biosynthesis; UDP-4-deoxy-4-formamido-beta-L-arabinose biosynthesis; UDP-4-deoxy-4-formamido-beta-L-arabinose from UDP-alpha-D-glucuronate: step 2/3. It participates in bacterial outer membrane biogenesis; lipopolysaccharide biosynthesis. Its function is as follows. Catalyzes the conversion of UDP-4-keto-arabinose (UDP-Ara4O) to UDP-4-amino-4-deoxy-L-arabinose (UDP-L-Ara4N). The modified arabinose is attached to lipid A and is required for resistance to polymyxin and cationic antimicrobial peptides. The protein is UDP-4-amino-4-deoxy-L-arabinose--oxoglutarate aminotransferase of Salmonella schwarzengrund (strain CVM19633).